Here is a 217-residue protein sequence, read N- to C-terminus: MOB kinase activator 3A (217 aa).

Residues Cys83, Cys88, His165, and His170 each contribute to the Zn(2+) site.

Belongs to the MOB1/phocein family.

May regulate the activity of kinases. In Pongo abelii (Sumatran orangutan), this protein is MOB kinase activator 3A (MOB3A).